The primary structure comprises 147 residues: Large ribosomal subunit protein bL9 (147 aa).

The protein belongs to the bacterial ribosomal protein bL9 family.

Functionally, binds to the 23S rRNA. The protein is Large ribosomal subunit protein bL9 of Campylobacter jejuni subsp. jejuni serotype O:2 (strain ATCC 700819 / NCTC 11168).